The sequence spans 59 residues: Large ribosomal subunit protein bL32 (59 aa).

The segment at 1–59 (MAVQQNKKSPSKRGMHRSHDHLSAAPLAVEPTTGETHLRHHVSPNGYYRGRKVIKTKND) is disordered. Composition is skewed to basic residues over residues 9 to 19 (SPSKRGMHRSH) and 49 to 59 (RGRKVIKTKND).

The protein belongs to the bacterial ribosomal protein bL32 family.

In Cupriavidus necator (strain ATCC 17699 / DSM 428 / KCTC 22496 / NCIMB 10442 / H16 / Stanier 337) (Ralstonia eutropha), this protein is Large ribosomal subunit protein bL32.